The following is a 129-amino-acid chain: Large ribosomal subunit protein uL22 (129 aa).

It belongs to the universal ribosomal protein uL22 family. In terms of assembly, part of the 50S ribosomal subunit.

This protein binds specifically to 23S rRNA; its binding is stimulated by other ribosomal proteins, e.g. L4, L17, and L20. It is important during the early stages of 50S assembly. It makes multiple contacts with different domains of the 23S rRNA in the assembled 50S subunit and ribosome. Its function is as follows. The globular domain of the protein is located near the polypeptide exit tunnel on the outside of the subunit, while an extended beta-hairpin is found that lines the wall of the exit tunnel in the center of the 70S ribosome. This chain is Large ribosomal subunit protein uL22, found in Rhizobium meliloti (strain 1021) (Ensifer meliloti).